A 241-amino-acid chain; its full sequence is Thymidylate kinase (241 aa).

17-24 (GGEGAGKT) contributes to the ATP binding site.

The protein belongs to the thymidylate kinase family.

The catalysed reaction is dTMP + ATP = dTDP + ADP. Functionally, phosphorylation of dTMP to form dTDP in both de novo and salvage pathways of dTTP synthesis. This Thermosynechococcus vestitus (strain NIES-2133 / IAM M-273 / BP-1) protein is Thymidylate kinase.